The sequence spans 589 residues: Serine/threonine-protein kinase STE7 homolog (589 aa).

A compositionally biased stretch (basic and acidic residues) spans 1 to 18 (MTRTTRIDTQEATKHKDL). Disordered regions lie at residues 1 to 162 (MTRT…DPDN) and 185 to 233 (RQHY…ASSQ). Positions 24–33 (PLSLSSNPNP) are enriched in low complexity. Over residues 57 to 69 (VKSTSGSLRSSDM) the composition is skewed to polar residues. The span at 92–121 (PTASSSATSTPTSNITGSSSASSIQFAQKS) shows a compositional bias: low complexity. 2 stretches are compositionally biased toward polar residues: residues 127-136 (IVSQTLSRPS) and 144-162 (SGYS…DPDN). The span at 185–203 (RQHYQNSHHHLPTTNRKRQ) shows a compositional bias: basic residues. Over residues 206–220 (ISSISPTKSSAASSS) the composition is skewed to low complexity. The segment covering 221–233 (LEPQIQSLPASSQ) has biased composition (polar residues). Positions 249-565 (LLTLKQLGSG…QLLEDKEHFF (317 aa)) constitute a Protein kinase domain. ATP-binding positions include 255–263 (LGSGNSGSV) and K278. The Proton acceptor role is filled by D374. S402 carries the phosphoserine modification. Phosphothreonine is present on T408. The tract at residues 473–499 (IAAERNGQNSPSRSRKNKQKGNGYNSY) is disordered.

It belongs to the protein kinase superfamily. STE Ser/Thr protein kinase family. MAP kinase kinase subfamily.

It carries out the reaction L-seryl-[protein] + ATP = O-phospho-L-seryl-[protein] + ADP + H(+). It catalyses the reaction L-threonyl-[protein] + ATP = O-phospho-L-threonyl-[protein] + ADP + H(+). The enzyme catalyses L-tyrosyl-[protein] + ATP = O-phospho-L-tyrosyl-[protein] + ADP + H(+). The sequence is that of Serine/threonine-protein kinase STE7 homolog (HST7) from Candida albicans (strain SC5314 / ATCC MYA-2876) (Yeast).